We begin with the raw amino-acid sequence, 142 residues long: Large ribosomal subunit protein uL13 (142 aa).

This sequence belongs to the universal ribosomal protein uL13 family. Part of the 50S ribosomal subunit.

In terms of biological role, this protein is one of the early assembly proteins of the 50S ribosomal subunit, although it is not seen to bind rRNA by itself. It is important during the early stages of 50S assembly. In Aeromonas hydrophila subsp. hydrophila (strain ATCC 7966 / DSM 30187 / BCRC 13018 / CCUG 14551 / JCM 1027 / KCTC 2358 / NCIMB 9240 / NCTC 8049), this protein is Large ribosomal subunit protein uL13.